A 160-amino-acid chain; its full sequence is Glyoxalase domain-containing protein 5 (160 aa).

The 121-residue stretch at 37-157 (RLDHIVMTVK…DRNLIEVSNY (121 aa)) folds into the VOC domain.

Belongs to the glyoxalase I family.

This chain is Glyoxalase domain-containing protein 5 (GLOD5), found in Homo sapiens (Human).